We begin with the raw amino-acid sequence, 451 residues long: Phosphoglucosamine mutase (451 aa).

Serine 107 acts as the Phosphoserine intermediate in catalysis. Positions 107, 246, 248, and 250 each coordinate Mg(2+). Serine 107 carries the phosphoserine modification.

It belongs to the phosphohexose mutase family. The cofactor is Mg(2+). In terms of processing, activated by phosphorylation.

It carries out the reaction alpha-D-glucosamine 1-phosphate = D-glucosamine 6-phosphate. Catalyzes the conversion of glucosamine-6-phosphate to glucosamine-1-phosphate. This Burkholderia vietnamiensis (strain G4 / LMG 22486) (Burkholderia cepacia (strain R1808)) protein is Phosphoglucosamine mutase.